The primary structure comprises 179 residues: Protein GrpE (179 aa).

Positions 1–29 (MQDQDKYAEQAASIEDPVTAEAASATTPT) are disordered.

It belongs to the GrpE family. Homodimer.

The protein resides in the cytoplasm. Participates actively in the response to hyperosmotic and heat shock by preventing the aggregation of stress-denatured proteins, in association with DnaK and GrpE. It is the nucleotide exchange factor for DnaK and may function as a thermosensor. Unfolded proteins bind initially to DnaJ; upon interaction with the DnaJ-bound protein, DnaK hydrolyzes its bound ATP, resulting in the formation of a stable complex. GrpE releases ADP from DnaK; ATP binding to DnaK triggers the release of the substrate protein, thus completing the reaction cycle. Several rounds of ATP-dependent interactions between DnaJ, DnaK and GrpE are required for fully efficient folding. The chain is Protein GrpE from Janthinobacterium sp. (strain Marseille) (Minibacterium massiliensis).